The sequence spans 124 residues: MDTPDDLYYTDDHEWLRVENGTATVGITDFAQSELGDIVFVELEPEGTKLGQDDIFGTVEAVKTVSELYMPVGGTITAINTELELSPEVVNEDPYGDGWMIEIELAAPDEAEELMGADAYAEVT.

The Lipoyl-binding domain maps to 22–104 (TATVGITDFA…YGDGWMIEIE (83 aa)). An N6-lipoyllysine modification is found at lysine 63.

This sequence belongs to the GcvH family. The glycine cleavage system is composed of four proteins: P, T, L and H. (R)-lipoate serves as cofactor.

Functionally, the glycine cleavage system catalyzes the degradation of glycine. The H protein shuttles the methylamine group of glycine from the P protein to the T protein. This is Glycine cleavage system H protein from Salinibacter ruber (strain DSM 13855 / M31).